We begin with the raw amino-acid sequence, 93 residues long: Small ribosomal subunit protein bS20 (93 aa).

This sequence belongs to the bacterial ribosomal protein bS20 family.

Its function is as follows. Binds directly to 16S ribosomal RNA. This chain is Small ribosomal subunit protein bS20, found in Hydrogenobaculum sp. (strain Y04AAS1).